Reading from the N-terminus, the 342-residue chain is Ferrochelatase (342 aa).

Positions 188 and 268 each coordinate Fe cation.

This sequence belongs to the ferrochelatase family.

It localises to the cytoplasm. The enzyme catalyses heme b + 2 H(+) = protoporphyrin IX + Fe(2+). It participates in porphyrin-containing compound metabolism; protoheme biosynthesis; protoheme from protoporphyrin-IX: step 1/1. Catalyzes the ferrous insertion into protoporphyrin IX. This is Ferrochelatase from Rickettsia prowazekii (strain Madrid E).